We begin with the raw amino-acid sequence, 448 residues long: Tubulin alpha chain, nucleomorph (448 aa).

GTP-binding residues include Gln11, Glu71, Ser140, Gly144, Thr145, Thr179, Asn206, and Asn228. Residue Glu71 participates in Mg(2+) binding. Glu254 is a catalytic residue.

This sequence belongs to the tubulin family. As to quaternary structure, dimer of alpha and beta chains. A typical microtubule is a hollow water-filled tube with an outer diameter of 25 nm and an inner diameter of 15 nM. Alpha-beta heterodimers associate head-to-tail to form protofilaments running lengthwise along the microtubule wall with the beta-tubulin subunit facing the microtubule plus end conferring a structural polarity. Microtubules usually have 13 protofilaments but different protofilament numbers can be found in some organisms and specialized cells. It depends on Mg(2+) as a cofactor.

The catalysed reaction is GTP + H2O = GDP + phosphate + H(+). Its function is as follows. Tubulin is the major constituent of microtubules, a cylinder consisting of laterally associated linear protofilaments composed of alpha- and beta-tubulin heterodimers. Microtubules grow by the addition of GTP-tubulin dimers to the microtubule end, where a stabilizing cap forms. Below the cap, tubulin dimers are in GDP-bound state, owing to GTPase activity of alpha-tubulin. The chain is Tubulin alpha chain, nucleomorph (tubA) from Guillardia theta (Cryptophyte).